The primary structure comprises 159 residues: Phosphopantetheine adenylyltransferase (159 aa).

Thr-9 lines the substrate pocket. ATP-binding positions include 9-10 (TF) and His-17. Residues Lys-41, Leu-73, and Arg-87 each contribute to the substrate site. ATP contacts are provided by residues 88–90 (GLR), Glu-98, and 123–129 (YAFLSST).

The protein belongs to the bacterial CoaD family. Homohexamer. The cofactor is Mg(2+).

The protein localises to the cytoplasm. It carries out the reaction (R)-4'-phosphopantetheine + ATP + H(+) = 3'-dephospho-CoA + diphosphate. It participates in cofactor biosynthesis; coenzyme A biosynthesis; CoA from (R)-pantothenate: step 4/5. Functionally, reversibly transfers an adenylyl group from ATP to 4'-phosphopantetheine, yielding dephospho-CoA (dPCoA) and pyrophosphate. In Vibrio campbellii (strain ATCC BAA-1116), this protein is Phosphopantetheine adenylyltransferase.